The chain runs to 307 residues: NAD kinase (307 aa).

The Proton acceptor role is filled by Asp85. Residues 85 to 86 (DG), Arg90, 159 to 160 (NE), Asp189, and 200 to 205 (TAYAFS) contribute to the NAD(+) site.

This sequence belongs to the NAD kinase family. The cofactor is a divalent metal cation.

Its subcellular location is the cytoplasm. It carries out the reaction NAD(+) + ATP = ADP + NADP(+) + H(+). Involved in the regulation of the intracellular balance of NAD and NADP, and is a key enzyme in the biosynthesis of NADP. Catalyzes specifically the phosphorylation on 2'-hydroxyl of the adenosine moiety of NAD to yield NADP. In Mycobacterium bovis (strain ATCC BAA-935 / AF2122/97), this protein is NAD kinase.